We begin with the raw amino-acid sequence, 568 residues long: AP2-like ethylene-responsive transcription factor PLT2 (568 aa).

Positions 151 to 171 (ASPAETSADNSSSTTNTSGGA) are enriched in low complexity. The segment at 151-173 (ASPAETSADNSSSTTNTSGGAIV) is disordered. DNA-binding regions (AP2/ERF) lie at residues 190–256 (IYRG…TNFP) and 292–350 (MYRG…TNFE). The disordered stretch occupies residues 548–568 (WNSGESAQGSNPGGVFTMWNE).

It belongs to the AP2/ERF transcription factor family. AP2 subfamily. Post-translationally, stabilized in root meristems by reactive oxygen species (ROS) mediated oxidative post-translational modification triggered by RGF1 hormone peptide in a RITF1-dependent manner. As to expression, expressed in roots, seedlings, flowers, and siliques. Also detected at low levels in leaves. In roots, specifically detected in the distal root meristem, including the QC. This tissue specificity is regulated by auxin gradient and depends on PIN proteins.

It is found in the nucleus. In terms of biological role, probably acts as a transcriptional activator. Binds to the GCC-box pathogenesis-related promoter element. May be involved in the regulation of gene expression by stress factors and by components of stress signal transduction pathways. Master regulator of basal/root fate. Essential for root quiescent center (QC) and columella specification, stem cell activity, as well as for establishment of the stem cell niche during embryogenesis. Modulates the root polar auxin transport by regulating the distribution of PIN genes. Essential role in respecifying pattern and polarity in damaged roots. Direct target of the transcriptional corepressor TPL. Expression levels and patterns regulated post-transcriptionally by root meristem growth factors (RGFs). In Arabidopsis thaliana (Mouse-ear cress), this protein is AP2-like ethylene-responsive transcription factor PLT2.